Here is a 284-residue protein sequence, read N- to C-terminus: Bifunctional protein FolD (284 aa).

NADP(+)-binding positions include 165 to 167 (GRS) and Ser-190.

The protein belongs to the tetrahydrofolate dehydrogenase/cyclohydrolase family. In terms of assembly, homodimer.

The enzyme catalyses (6R)-5,10-methylene-5,6,7,8-tetrahydrofolate + NADP(+) = (6R)-5,10-methenyltetrahydrofolate + NADPH. It catalyses the reaction (6R)-5,10-methenyltetrahydrofolate + H2O = (6R)-10-formyltetrahydrofolate + H(+). It participates in one-carbon metabolism; tetrahydrofolate interconversion. Functionally, catalyzes the oxidation of 5,10-methylenetetrahydrofolate to 5,10-methenyltetrahydrofolate and then the hydrolysis of 5,10-methenyltetrahydrofolate to 10-formyltetrahydrofolate. In Streptococcus gordonii (strain Challis / ATCC 35105 / BCRC 15272 / CH1 / DL1 / V288), this protein is Bifunctional protein FolD.